The sequence spans 245 residues: Nucleoprotein (245 aa).

5 residues coordinate RNA: Tyr30, Lys67, Arg106, Arg186, and Ser196.

The protein belongs to the phlebovirus nucleocapsid protein family. Homodimer. Homohexamer; ring-shaped, necessary to form the nucleocapsid. Homopentamers; opened pentamers in solution. Binds to viral genomic RNA. Interacts with glycoprotein Gn; this interaction allows packaging of nucleocapsids into virions.

The protein resides in the virion. Its subcellular location is the host cytoplasm. The protein localises to the host nucleus. It localises to the host endoplasmic reticulum-Golgi intermediate compartment. It is found in the host Golgi apparatus. Its function is as follows. Encapsidates the genomic RNA, protecting it from nucleases. Displays high affinity for single-stranded nucleic acid. The encapsidated genomic RNA is termed the nucleocapsid (NC) or ribonucleoprotein. The ribonucleoprotein has a non-helical structure. Serves as template for viral transcription and replication. After replication, the nucleocapsid is recruited to the host Golgi apparatus by glycoprotein Gn for packaging into virus particles. The polypeptide is Nucleoprotein (NP) (Dabie bandavirus (Severe fever with thrombocytopenia virus)).